The primary structure comprises 790 residues: PGC-1 and ERR-induced regulator in muscle protein 1 (790 aa).

Disordered stretches follow at residues 38–391 (LLSS…TPIS), 425–449 (VASS…STPV), 507–545 (SVAG…EAVA), and 626–648 (QRSR…APIP). Low complexity predominate over residues 40 to 52 (SSDIDQGDSSGSS). Polar residues-rich tracts occupy residues 80–89 (ATQQPVSRSQ) and 98–107 (TGQQTPSTSA). Residues 111-123 (APPSLGPGASPPS) are compositionally biased toward low complexity. Pro residues predominate over residues 146 to 157 (APRPPGEPPGSP). Over residues 158-169 (KSPGHSTGSQRP) the composition is skewed to low complexity. Positions 170–179 (PDSPGAPPRS) are enriched in pro residues. The span at 366–391 (KPQSDTAVSTPASEPQSSVALSTPIS) shows a compositional bias: polar residues. Residues 515-532 (KPGSGQASARPSAPQTAT) are compositionally biased toward polar residues. Positions 635–648 (EPLPRADPVPAPIP) are enriched in pro residues.

As to expression, muscle-specific expression is increased by endurance exercise.

Its subcellular location is the cytoplasm. It is found in the nucleus. Regulates the expression of selective PPARGC1A/B and ESRRA/B/G target genes with roles in glucose and lipid metabolism, energy transfer, contractile function, muscle mitochondrial biogenesis and oxidative capacity. Required for the efficient induction of MT-CO2, MT-CO3, COX4I1, TFB1M, TFB2M, POLRMT and SIRT3 by PPARGC1A. Positively regulates the PPARGC1A/ESRRG-induced expression of CKMT2, TNNI3 and SLC2A4 and negatively regulates the PPARGC1A/ESRRG-induced expression of PDK4. The polypeptide is PGC-1 and ERR-induced regulator in muscle protein 1 (PERM1) (Homo sapiens (Human)).